A 28-amino-acid polypeptide reads, in one-letter code: Ranatuerin-2LTa (28 aa).

Cys-23 and Cys-28 are joined by a disulfide.

As to expression, expressed by the skin glands.

It is found in the secreted. Its function is as follows. Has antibacterial activity. This is Ranatuerin-2LTa from Rana latastei (Italian agile frog).